The following is a 548-amino-acid chain: Viridiflorene synthase (548 aa).

Residues D301, D305, D444, T448, and E452 each contribute to the Mg(2+) site. Positions 301-305 (DDTFD) match the DDXXD motif motif.

This sequence belongs to the terpene synthase family. Tpsa subfamily. Requires Mg(2+) as cofactor. In terms of tissue distribution, expressed in stem and leaf trichomes. Detected in roots, fruits and flowers.

Its subcellular location is the cytoplasm. The catalysed reaction is (2E,6E)-farnesyl diphosphate = viridiflorene + diphosphate. Its pathway is secondary metabolite biosynthesis; terpenoid biosynthesis. Its function is as follows. Sesquiterpene synthase involved in the production of viridiflorene from (E,E)-farnesyl diphosphate. Can also use (Z,Z)-FPP to make several unidentified sesquiterpenes. The protein is Viridiflorene synthase of Solanum lycopersicum (Tomato).